Consider the following 475-residue polypeptide: Ribulose bisphosphate carboxylase large chain (475 aa).

Residues 1–2 constitute a propeptide that is removed on maturation; it reads MS. At Pro3 the chain carries N-acetylproline. Lys14 is subject to N6,N6,N6-trimethyllysine. Substrate is bound by residues Asn123 and Thr173. Residue Lys175 is the Proton acceptor of the active site. Lys177 provides a ligand contact to substrate. Lys201, Asp203, and Glu204 together coordinate Mg(2+). Lys201 is subject to N6-carboxylysine. The active-site Proton acceptor is the His294. The substrate site is built by Arg295, His327, and Ser379.

It belongs to the RuBisCO large chain family. Type I subfamily. Heterohexadecamer of 8 large chains and 8 small chains; disulfide-linked. The disulfide link is formed within the large subunit homodimers. Mg(2+) is required as a cofactor. The disulfide bond which can form in the large chain dimeric partners within the hexadecamer appears to be associated with oxidative stress and protein turnover.

The protein localises to the plastid. It localises to the chloroplast. It carries out the reaction 2 (2R)-3-phosphoglycerate + 2 H(+) = D-ribulose 1,5-bisphosphate + CO2 + H2O. It catalyses the reaction D-ribulose 1,5-bisphosphate + O2 = 2-phosphoglycolate + (2R)-3-phosphoglycerate + 2 H(+). Its function is as follows. RuBisCO catalyzes two reactions: the carboxylation of D-ribulose 1,5-bisphosphate, the primary event in carbon dioxide fixation, as well as the oxidative fragmentation of the pentose substrate in the photorespiration process. Both reactions occur simultaneously and in competition at the same active site. The sequence is that of Ribulose bisphosphate carboxylase large chain from Anthoceros angustus (Hornwort).